We begin with the raw amino-acid sequence, 658 residues long: DNA mismatch repair protein MutL (658 aa).

A compositionally biased stretch (basic and acidic residues) spans 114–130; it reads RQEDSSHATQVKAEDGK. The interval 114-137 is disordered; it reads RQEDSSHATQVKAEDGKLSSPTAA.

This sequence belongs to the DNA mismatch repair MutL/HexB family.

Its function is as follows. This protein is involved in the repair of mismatches in DNA. It is required for dam-dependent methyl-directed DNA mismatch repair. May act as a 'molecular matchmaker', a protein that promotes the formation of a stable complex between two or more DNA-binding proteins in an ATP-dependent manner without itself being part of a final effector complex. This Neisseria meningitidis serogroup C / serotype 2a (strain ATCC 700532 / DSM 15464 / FAM18) protein is DNA mismatch repair protein MutL.